The following is a 309-amino-acid chain: Porphobilinogen deaminase (309 aa).

C242 carries the post-translational modification S-(dipyrrolylmethanemethyl)cysteine.

Belongs to the HMBS family. As to quaternary structure, monomer. It depends on dipyrromethane as a cofactor.

It carries out the reaction 4 porphobilinogen + H2O = hydroxymethylbilane + 4 NH4(+). It participates in porphyrin-containing compound metabolism; protoporphyrin-IX biosynthesis; coproporphyrinogen-III from 5-aminolevulinate: step 2/4. In terms of biological role, tetrapolymerization of the monopyrrole PBG into the hydroxymethylbilane pre-uroporphyrinogen in several discrete steps. The protein is Porphobilinogen deaminase of Syntrophobacter fumaroxidans (strain DSM 10017 / MPOB).